We begin with the raw amino-acid sequence, 86 residues long: DNA-directed RNA polymerase subunit Rpo6 (86 aa).

This sequence belongs to the archaeal Rpo6/eukaryotic RPB6 RNA polymerase subunit family. In terms of assembly, part of the RNA polymerase complex.

It localises to the cytoplasm. The catalysed reaction is RNA(n) + a ribonucleoside 5'-triphosphate = RNA(n+1) + diphosphate. Its function is as follows. DNA-dependent RNA polymerase (RNAP) catalyzes the transcription of DNA into RNA using the four ribonucleoside triphosphates as substrates. The chain is DNA-directed RNA polymerase subunit Rpo6 from Sulfurisphaera tokodaii (strain DSM 16993 / JCM 10545 / NBRC 100140 / 7) (Sulfolobus tokodaii).